A 190-amino-acid chain; its full sequence is Putative 3-methyladenine DNA glycosylase (190 aa).

It belongs to the DNA glycosylase MPG family.

The chain is Putative 3-methyladenine DNA glycosylase from Chlamydia abortus (strain DSM 27085 / S26/3) (Chlamydophila abortus).